Consider the following 579-residue polypeptide: Folliculin (579 aa).

A disordered region spans residues G32–I52. The 157-residue stretch at R86 to T242 folds into the uDENN FLCN/SMCR8-type domain. The 155-residue stretch at N337–S491 folds into the cDENN FLCN/SMCR8-type domain. Residues E493–S558 enclose the dDENN FLCN/SMCR8-type domain.

This sequence belongs to the folliculin family. As to quaternary structure, component of the lysosomal folliculin complex (LFC).

The protein localises to the lysosome membrane. The protein resides in the cytoplasm. It localises to the cytosol. It is found in the cell projection. Its subcellular location is the cilium. The protein localises to the cytoskeleton. The protein resides in the microtubule organizing center. It localises to the centrosome. It is found in the spindle. Its subcellular location is the nucleus. Its activity is regulated as follows. GTPase-activating activity is inhibited in the folliculin complex (LFC), which stabilizes the GDP-bound state of RagA/RRAGA (or RagB/RRAGB), because Arg-164 is located far from the RagC/RRAGC or RagD/RRAGD nucleotide pocket. Disassembly of the LFC complex upon amino acid restimulation liberates the GTPase-activating activity. Multi-functional protein, involved in both the cellular response to amino acid availability and in the regulation of glycolysis. GTPase-activating protein that plays a key role in the cellular response to amino acid availability through regulation of the non-canonical mTORC1 signaling cascade controlling the MiT/TFE factors tfeb and tfe3. Activates mTORC1 by acting as a GTPase-activating protein: specifically stimulates GTP hydrolysis by RagC/RRAGC or RagD/RRAGD, promoting the conversion to the GDP-bound state of RagC/RRAGC or RagD/RRAGD, and thereby activating the kinase activity of mTORC1. The GTPase-activating activity is inhibited during starvation and activated in presence of nutrients. Acts as a key component for non-canonical mTORC1-dependent control of the MiT/TFE factors tfeb and tfe3, while it is not involved in mTORC1-dependent phosphorylation of canonical RPS6KB1/S6K1 and EIF4EBP1/4E-BP1. In low-amino acid conditions, the lysosomal folliculin complex (LFC) is formed on the membrane of lysosomes, which inhibits the GTPase-activating activity of flcn, inactivates mTORC1 and maximizes nuclear translocation of tfeb and tfe3. Upon amino acid restimulation, RagA/RRAGA (or RagB/RRAGB) nucleotide exchange promotes disassembly of the LFC complex and liberates the GTPase-activating activity of flcn, leading to activation of mTORC1 and subsequent cytoplasmic retention of tfeb and tfe3. Required for the exit of hematopoietic stem cell from pluripotency by promoting mTOR-dependent cytoplasmic retention of tfe3, thereby increasing Wnt signaling. Acts as an inhibitor of browning of adipose tissue by regulating mTOR-dependent cytoplasmic retention of tfe3. In response to flow stress, regulates STK11/LKB1 accumulation and mTORC1 activation through primary cilia. Required for starvation-induced perinuclear clustering of lysosomes by promoting association of rilp with its effector rab34. Involved in the control of embryonic stem cells differentiation; together with lamtor1 it is necessary to recruit and activate RagC/RRAGC and RagD/RRAGD at the lysosomes, and to induce exit of embryonic stem cells from pluripotency via non-canonical, mTOR-independent tfe3 inactivation. Regulates glycolysis by binding to lactate dehydrogenase ldha, acting as an uncompetitive inhibitor. The polypeptide is Folliculin (Xenopus tropicalis (Western clawed frog)).